We begin with the raw amino-acid sequence, 142 residues long: Large ribosomal subunit protein uL11 (142 aa).

This sequence belongs to the universal ribosomal protein uL11 family. In terms of assembly, part of the ribosomal stalk of the 50S ribosomal subunit. Interacts with L10 and the large rRNA to form the base of the stalk. L10 forms an elongated spine to which L12 dimers bind in a sequential fashion forming a multimeric L10(L12)X complex. In terms of processing, one or more lysine residues are methylated.

Its function is as follows. Forms part of the ribosomal stalk which helps the ribosome interact with GTP-bound translation factors. This Shigella boydii serotype 4 (strain Sb227) protein is Large ribosomal subunit protein uL11.